The sequence spans 205 residues: 3-demethoxyubiquinol 3-hydroxylase (205 aa).

The Fe cation site is built by E54, E84, H87, E136, E168, and H171.

The protein belongs to the COQ7 family. The cofactor is Fe cation.

It is found in the cell membrane. It catalyses the reaction a 5-methoxy-2-methyl-3-(all-trans-polyprenyl)benzene-1,4-diol + AH2 + O2 = a 3-demethylubiquinol + A + H2O. It participates in cofactor biosynthesis; ubiquinone biosynthesis. In terms of biological role, catalyzes the hydroxylation of 2-nonaprenyl-3-methyl-6-methoxy-1,4-benzoquinol during ubiquinone biosynthesis. The chain is 3-demethoxyubiquinol 3-hydroxylase from Acidovorax sp. (strain JS42).